The chain runs to 89 residues: Putative membrane protein insertion efficiency factor (89 aa).

The protein belongs to the UPF0161 family.

The protein resides in the cell inner membrane. Could be involved in insertion of integral membrane proteins into the membrane. In Petrotoga mobilis (strain DSM 10674 / SJ95), this protein is Putative membrane protein insertion efficiency factor.